Reading from the N-terminus, the 212-residue chain is Ribosomal RNA small subunit methyltransferase G (212 aa).

Residues Gly-76, Met-81, 127–128 (VE), and Arg-145 each bind S-adenosyl-L-methionine.

Belongs to the methyltransferase superfamily. RNA methyltransferase RsmG family.

It localises to the cytoplasm. The enzyme catalyses guanosine(527) in 16S rRNA + S-adenosyl-L-methionine = N(7)-methylguanosine(527) in 16S rRNA + S-adenosyl-L-homocysteine. Its function is as follows. Specifically methylates the N7 position of guanine in position 527 of 16S rRNA. The chain is Ribosomal RNA small subunit methyltransferase G from Acinetobacter baylyi (strain ATCC 33305 / BD413 / ADP1).